Here is a 343-residue protein sequence, read N- to C-terminus: Mitochondrial amidoxime-reducing component 1 (343 aa).

Residues Met-1 to Leu-25 are Mitochondrial matrix-facing. The helical; Signal-anchor for type II membrane protein transmembrane segment at Pro-26 to Trp-44 threads the bilayer. At Arg-45 to Gly-343 the chain is on the cytoplasmic side. Positions 69, 70, and 94 each coordinate Mo-molybdopterin. The interval His-95–Phe-186 is MOSC N-terminal region. The 159-residue stretch at Tyr-181–Val-339 folds into the MOSC domain. Ser-215, Arg-242, Arg-276, Cys-277, and Tyr-321 together coordinate Mo-molybdopterin.

Mo-molybdopterin serves as cofactor.

The protein localises to the mitochondrion outer membrane. Its subcellular location is the membrane. The catalysed reaction is N(omega)-hydroxy-L-arginine + 2 Fe(II)-[cytochrome b5] + 2 H(+) = L-arginine + 2 Fe(III)-[cytochrome b5] + H2O. Functionally, catalyzes the reduction of N-oxygenated molecules, acting as a counterpart of cytochrome P450 and flavin-containing monooxygenases in metabolic cycles. As a component of prodrug-converting system, reduces a multitude of N-hydroxylated prodrugs particularly amidoximes, leading to increased drug bioavailability. May be involved in mitochondrial N(omega)-hydroxy-L-arginine (NOHA) reduction, regulating endogenous nitric oxide levels and biosynthesis. Postulated to cleave the N-OH bond of N-hydroxylated substrates in concert with electron transfer from NADH to cytochrome b5 reductase then to cytochrome b5, the ultimate electron donor that primes the active site for substrate reduction. The chain is Mitochondrial amidoxime-reducing component 1 (mtarc1) from Xenopus laevis (African clawed frog).